The sequence spans 617 residues: UvrABC system protein C (617 aa).

The GIY-YIG domain maps to 11-85; it reads TTPGVYIFRK…IKQHRPHYNV (75 aa). Residues 194 to 229 form the UVR domain; sequence APVIARLKEDMKVAAQGQDFEQAARLRDRVQAVEKL.

Belongs to the UvrC family. In terms of assembly, interacts with UvrB in an incision complex.

It localises to the cytoplasm. Its function is as follows. The UvrABC repair system catalyzes the recognition and processing of DNA lesions. UvrC both incises the 5' and 3' sides of the lesion. The N-terminal half is responsible for the 3' incision and the C-terminal half is responsible for the 5' incision. The protein is UvrABC system protein C of Deinococcus radiodurans (strain ATCC 13939 / DSM 20539 / JCM 16871 / CCUG 27074 / LMG 4051 / NBRC 15346 / NCIMB 9279 / VKM B-1422 / R1).